The sequence spans 652 residues: DNA ligase (652 aa).

NAD(+) contacts are provided by residues 29–33 (DSEYD), 78–79 (SL), and Glu-107. Lys-109 serves as the catalytic N6-AMP-lysine intermediate. NAD(+) contacts are provided by Arg-130, Glu-164, Lys-278, and Lys-302. Zn(2+) is bound by residues Cys-395, Cys-398, Cys-413, and Cys-418. A BRCT domain is found at 577–652 (VADAALSGLT…VRDEAWLESL (76 aa)).

The protein belongs to the NAD-dependent DNA ligase family. LigA subfamily. It depends on Mg(2+) as a cofactor. Mn(2+) is required as a cofactor.

The catalysed reaction is NAD(+) + (deoxyribonucleotide)n-3'-hydroxyl + 5'-phospho-(deoxyribonucleotide)m = (deoxyribonucleotide)n+m + AMP + beta-nicotinamide D-nucleotide.. In terms of biological role, DNA ligase that catalyzes the formation of phosphodiester linkages between 5'-phosphoryl and 3'-hydroxyl groups in double-stranded DNA using NAD as a coenzyme and as the energy source for the reaction. It is essential for DNA replication and repair of damaged DNA. The sequence is that of DNA ligase from Streptococcus pneumoniae (strain P1031).